The primary structure comprises 358 residues: Phosphate acyltransferase (358 aa).

It belongs to the PlsX family. In terms of assembly, homodimer. Probably interacts with PlsY.

The protein localises to the cytoplasm. It catalyses the reaction a fatty acyl-[ACP] + phosphate = an acyl phosphate + holo-[ACP]. The protein operates within lipid metabolism; phospholipid metabolism. In terms of biological role, catalyzes the reversible formation of acyl-phosphate (acyl-PO(4)) from acyl-[acyl-carrier-protein] (acyl-ACP). This enzyme utilizes acyl-ACP as fatty acyl donor, but not acyl-CoA. The sequence is that of Phosphate acyltransferase from Escherichia fergusonii (strain ATCC 35469 / DSM 13698 / CCUG 18766 / IAM 14443 / JCM 21226 / LMG 7866 / NBRC 102419 / NCTC 12128 / CDC 0568-73).